A 1795-amino-acid polypeptide reads, in one-letter code: Type III effector AvrE (1795 aa).

Residues 1–18 show a composition bias toward polar residues; that stretch reads MQSPSIHRNTGSIIQPTV. The segment at 1-227 is disordered; it reads MQSPSIHRNT…PPREPMLWRS (227 aa). Low complexity predominate over residues 60 to 75; the sequence is KSKAPQQKAATPPTAK. 2 stretches are compositionally biased toward polar residues: residues 97-109 and 117-127; these read GFSN…THSA and HPNQASSSGAQ. Over residues 129–154 the composition is skewed to basic and acidic residues; sequence HEIHPEAAPRKNLRVRFDLPQDRLER. Positions 174–191 are enriched in polar residues; it reads ATRQFRSPDSHLQGSDGT. Residues 203 to 215 are compositionally biased toward low complexity; that stretch reads PSSSGSKIGDSDG. Short sequence motifs (wxxxE) lie at residues 393–397 and 829–833; these read WKIPE and WQRFE. Positions 1461–1488 are disordered; it reads QIGGSHTAPTGTPASAPGPTPASQTAAN. Low complexity predominate over residues 1467–1487; the sequence is TAPTGTPASAPGPTPASQTAA. The ERMRS signature appears at 1787–1790; sequence KKEG.

The protein belongs to the AvrE family. In planta interaction assays, interacts with the A.thaliana protein phosphatase 2A (PP2A) via direct interaction/association with specific B' regulatory subunits.

The protein localises to the secreted. It localises to the host cell. The protein resides in the host cell membrane. With respect to regulation, polyamidoamine dendrimers inhibit channel and virulence activities. In terms of biological role, major virulence factor that may function as a water- and solute-permeable channel dedicated to creating osmotic/water potential perturbation and a water- and nutrient-rich apoplast in which bacteria multiply within the infected plant tissues. Expression in Xenopus oocytes results in inward and outward currents, permeability to water and osmolarity-dependent oocyte swelling and bursting. Functionally, elicits cell death in host tomato leaves and in non-host Nicotiana tabacum leaves. Acts within plant cells and promotes lesion formation. The combined action of AvrE and HopM1 is particularly important in promoting bacterial growth in plants. Contributes to the down-regulation of a specific subset of A.thaliana genes during infection, including NHL13, which is required for antibacterial immunity. The protein is Type III effector AvrE of Pseudomonas syringae pv. tomato (strain ATCC BAA-871 / DC3000).